The following is a 122-amino-acid chain: Large ribosomal subunit protein uL14 (122 aa).

The protein belongs to the universal ribosomal protein uL14 family. In terms of assembly, part of the 50S ribosomal subunit. Forms a cluster with proteins L3 and L19. In the 70S ribosome, L14 and L19 interact and together make contacts with the 16S rRNA in bridges B5 and B8.

Binds to 23S rRNA. Forms part of two intersubunit bridges in the 70S ribosome. This is Large ribosomal subunit protein uL14 from Streptococcus thermophilus (strain CNRZ 1066).